Consider the following 248-residue polypeptide: uncharacterized protein (248 aa).

A helical membrane pass occupies residues 30–50; sequence LIALAIFIGLIAIFMFGCKAA. Disordered stretches follow at residues 59-91 and 208-248; these read NRDT…MDPP and TTES…VSTR. 2 stretches are compositionally biased toward polar residues: residues 210-220 and 239-248; these read ESPAPAQSTSN and SLHNETVSTR.

It localises to the membrane. This is an uncharacterized protein from Caenorhabditis elegans.